The following is a 122-amino-acid chain: Vacuolar transporter chaperone complex subunit 1 (122 aa).

Topologically, residues 1–32 (MSTQPLLQTTPGKRIALPVRVEPKVFFANERT) are cytoplasmic. Residues 33–53 (FLSWLSFAVVLGGLSVGLLNF) traverse the membrane as a helical segment. Over 54–59 (GDRIGK) the chain is Vacuolar. A helical transmembrane segment spans residues 60–80 (ISAGLFTIVAIGTMGYALGIY). Residues 81–101 (HWRASAIRRRGSGPYDDRLGP) are Cytoplasmic-facing. Residues 102-122 (TILCFVLLAAIITNFVLRMLF) traverse the membrane as a helical segment.

It belongs to the VTC1 family. In terms of assembly, the VTC core complex is an integral membrane heterooligomer composed of at least the catalytic subunit vtc4 and the accessory subunits vtc1 and vtc2. vtc1 is a small membrane protein without hydrophilic domain. Vtc2 and vtc4 are related and have 2 hydrophilic domains that face the cytosol, an N-terminal SPX domain and the central core domain. The central core in vtc4 is the catalytic domain. Vtc1 interacts with GTP-bound Ras-like cdc42, which is subsequently inactivated.

It localises to the vacuole membrane. Functionally, accessory subunit of the vacuolar transporter chaperone (VTC) complex. The VTC complex acts as a vacuolar polyphosphate polymerase that catalyzes the synthesis of inorganic polyphosphate (polyP) via transfer of phosphate from ATP to a growing polyP chain, releasing ADP. VTC exposes its catalytic domain vtc4 to the cytosol, where the growing polyP chain winds through a tunnel-shaped pocket, integrating cytoplasmic polymer synthesis with polyP membrane translocation. The VTC complex carries 9 vacuolar transmembrane domains, which are likely to constitute the translocation channel into the organelle lumen. PolyP synthesis is tightly coupled to its transport into the vacuole lumen, in order to avoid otherwise toxic intermediates in the cytosol, and it depends on the proton gradient across the membrane, formed by V-ATPase. Vtc1 contributes only 3 transmembrane domains to the complex. The VTC complex also plays a role in vacuolar membrane fusion. Involved in the control of cell polarity. This chain is Vacuolar transporter chaperone complex subunit 1, found in Schizosaccharomyces pombe (strain 972 / ATCC 24843) (Fission yeast).